The primary structure comprises 579 residues: Eukaryotic translation initiation factor 3 subunit D (579 aa).

Disordered stretches follow at residues 1–20, 51–72, and 109–170; these read MASF…GPAS, NASG…RARD, and RRGG…FGWK. Residues 51–64 are compositionally biased toward low complexity; it reads NASGASNDAANARG. Residues 120 to 167 are compositionally biased toward gly residues; sequence GGRGGRGGAGGAGAAGGRGASKFGAGAGRGARGGRGGAAGARRGGGRF. Residues 307 to 321 form an RNA gate region; it reads AFDYLTVNENAADPP.

It belongs to the eIF-3 subunit D family. Component of the eukaryotic translation initiation factor 3 (eIF-3) complex.

The protein localises to the cytoplasm. Functionally, mRNA cap-binding component of the eukaryotic translation initiation factor 3 (eIF-3) complex, which is involved in protein synthesis of a specialized repertoire of mRNAs and, together with other initiation factors, stimulates binding of mRNA and methionyl-tRNAi to the 40S ribosome. The eIF-3 complex specifically targets and initiates translation of a subset of mRNAs involved in cell proliferation. In the eIF-3 complex, eif3d specifically recognizes and binds the 7-methylguanosine cap of a subset of mRNAs. This Mycosarcoma maydis (Corn smut fungus) protein is Eukaryotic translation initiation factor 3 subunit D.